A 378-amino-acid chain; its full sequence is Putative gustatory receptor 22f (378 aa).

Topologically, residues 1–13 (MKMFQPRRGFSCH) are cytoplasmic. A helical transmembrane segment spans residues 14 to 34 (LAWFMLQTTLYASWLLGLFPF). Topologically, residues 35–48 (TFDSRRKQLKRSRW) are extracellular. The helical transmembrane segment at 49–69 (LLLYGFVLHSLAMCLAMSSHL) threads the bilayer. Residues 70 to 88 (ASKQRRKYNAFERNPLLEK) lie on the Cytoplasmic side of the membrane. The chain crosses the membrane as a helical span at residues 89–109 (IYMQFQVTTFFTISVLLLMNV). Residues 110–143 (WKSNTVRKIANELLTLEGQVKDLLTLKNCPNFNC) are Extracellular-facing. The chain crosses the membrane as a helical span at residues 144 to 164 (FVIKKHVAAIGQFVISIYFCL). At 165–178 (CQENSYPKILKILC) the chain is on the cytoplasmic side. The helical transmembrane segment at 179 to 199 (CLPSVGLQLIIMHFHTEIILV) threads the bilayer. The Extracellular portion of the chain corresponds to 200-245 (YRYVWLVNETLEDSHHLSSSRIHALASLYDRLLKLSELVVACNDLQ). N-linked (GlcNAc...) asparagine glycosylation occurs at Asn-207. A helical membrane pass occupies residues 246–266 (LILMLIIYLIGNTVQIFFLIV). Residues 267-354 (LGVSMNKRYI…LCGLFSINHN (88 aa)) are Cytoplasmic-facing. Residues 355 to 375 (MGFQMIITSFLYLVYLLQFDF) form a helical membrane-spanning segment. The Extracellular segment spans residues 376 to 378 (MNL).

The protein belongs to the insect chemoreceptor superfamily. Gustatory receptor (GR) family. Gr22e subfamily. In terms of tissue distribution, taste bristles in the foreleg and labial palps.

Its subcellular location is the cell membrane. Probable gustatory receptor which mediates acceptance or avoidance behavior, depending on its substrates. The chain is Putative gustatory receptor 22f (Gr22f) from Drosophila melanogaster (Fruit fly).